The chain runs to 434 residues: Glucose-6-phosphate 1-dehydrogenase (434 aa).

NADP(+)-binding positions include 7–14, R36, Y93, and K112; that span reads GSSGDLAK. Residues K112, 137–141, E175, and D193 contribute to the D-glucose 6-phosphate site; that span reads HYLLK. Residue H198 is the Proton acceptor of the active site. Residues K280 and K285 each coordinate D-glucose 6-phosphate. R286 contributes to the NADP(+) binding site.

Belongs to the glucose-6-phosphate dehydrogenase family.

The catalysed reaction is D-glucose 6-phosphate + NADP(+) = 6-phospho-D-glucono-1,5-lactone + NADPH + H(+). The protein operates within carbohydrate degradation; pentose phosphate pathway; D-ribulose 5-phosphate from D-glucose 6-phosphate (oxidative stage): step 1/3. Its function is as follows. Catalyzes the rate-limiting step of the oxidative pentose-phosphate pathway, which represents a route for the dissimilation of carbohydrates besides glycolysis. The main function of this enzyme is to provide reducing power (NADPH) and pentose phosphates for fatty acid and nucleic acid synthesis. This is Glucose-6-phosphate 1-dehydrogenase (ZWF1) from Encephalitozoon cuniculi (strain GB-M1) (Microsporidian parasite).